Reading from the N-terminus, the 121-residue chain is Large ribosomal subunit protein bL19 (121 aa).

It belongs to the bacterial ribosomal protein bL19 family.

Its function is as follows. This protein is located at the 30S-50S ribosomal subunit interface and may play a role in the structure and function of the aminoacyl-tRNA binding site. The sequence is that of Large ribosomal subunit protein bL19 from Chlamydia caviae (strain ATCC VR-813 / DSM 19441 / 03DC25 / GPIC) (Chlamydophila caviae).